Consider the following 296-residue polypeptide: Ribosomal protein L11 methyltransferase (296 aa).

Residues Thr-139, Gly-163, Asp-185, and Asn-232 each contribute to the S-adenosyl-L-methionine site.

It belongs to the methyltransferase superfamily. PrmA family.

Its subcellular location is the cytoplasm. The enzyme catalyses L-lysyl-[protein] + 3 S-adenosyl-L-methionine = N(6),N(6),N(6)-trimethyl-L-lysyl-[protein] + 3 S-adenosyl-L-homocysteine + 3 H(+). Its function is as follows. Methylates ribosomal protein L11. The sequence is that of Ribosomal protein L11 methyltransferase from Rippkaea orientalis (strain PCC 8801 / RF-1) (Cyanothece sp. (strain PCC 8801)).